The chain runs to 513 residues: ATP synthase subunit alpha 2 (513 aa).

169 to 176 lines the ATP pocket; sequence GDRQTGKT.

This sequence belongs to the ATPase alpha/beta chains family. As to quaternary structure, F-type ATPases have 2 components, CF(1) - the catalytic core - and CF(0) - the membrane proton channel. CF(1) has five subunits: alpha(3), beta(3), gamma(1), delta(1), epsilon(1). CF(0) has three main subunits: a(1), b(2) and c(9-12). The alpha and beta chains form an alternating ring which encloses part of the gamma chain. CF(1) is attached to CF(0) by a central stalk formed by the gamma and epsilon chains, while a peripheral stalk is formed by the delta and b chains.

It localises to the cell inner membrane. The catalysed reaction is ATP + H2O + 4 H(+)(in) = ADP + phosphate + 5 H(+)(out). In terms of biological role, produces ATP from ADP in the presence of a proton gradient across the membrane. The alpha chain is a regulatory subunit. In Shewanella frigidimarina (strain NCIMB 400), this protein is ATP synthase subunit alpha 2.